Reading from the N-terminus, the 1901-residue chain is MDTQPAPVPHVLPQDVYEFPDDQESLGRLRVSEMPAELNGGGGGGSAAAFAMELPEQSNKKRKRCGVCVPCLRKEPCGACYNCVNRSTSHQICKMRKCEQLKKKRVVPMKGVENCSESILVDGPKTDQMEAGPVNHVQEGRLKQECDSTLPSKGCEDLANQLLMEANSWLSNTAAPQDPCNKLNWDKPTIPNHAANNNSNLEDAKNLVAFSAVAEAMSTYGMPASGTPSSVSLQLYEKFNYETNRDNSGHLEGNAPSCPEDLNTLKAALALAKHGVKPPNCNCDGPECPDYLEWLENKIKSTVKGSQESPFPNLGQVSKELVQKQYPKEQVLNLENKNSTCPSGNLPFSQNALSLAKEKNISLQTAIAIEALTQLSSALPQTNNECPNAPSQPLINPHDQLTHFPSAKGNQLPMLPVARNELFQNQQSQLYTGKNALPVPQSPRQTSWEQNKKSSYQEGQYIPENLSHSSSVLPSDASTPQKPEFLQQWVQNADLLKSPSDPMTGLKQLLGNTDEYIKSVFKGPEALPNKKNVKPKHTIKSIKKESTEFLKMSPDQQLSQLLQTNEFHRNTQAALQQHLHHKRNLFVDPNAMEACTQEQQNWWVPSSQQAPVSKTTEKPVKERKKRRQSPSQKQVEPKPKPQRKQVQIKKPKVKEGSAVFMPVSQISLDTFRRVEKEENQGKEMDAENSLPNNVQTELLESQSLQLTGSQANPDDRKTVNTQEMCNENQSNIGKANNFALCVNRANSFVAKDQCPTPSTHDTSSSSGQGDSANQHTNVSDVPGQNDLSCLDDKLEDLIRQFEAEFGEDFSLPGSAVPSQNGEGPPKQTPSGDPQFKLPFPSQLLPPENSTKPATHSNPALSNNPVSREVSNNLDSLFSSKSPKQIKIESSGAITVVSTTCFYSEENQHLDGTPTKSDLPFNPTLSGFLDSPLKYLTSPTKSLIDTPAKKAQAEFPTCDCVEQINEKDEGPYYTHLGSGPTVASIRELMEERFGQKGDAIRIEKVIYTGKEGKSSRGCPIAKWVIRRQSEDEKLMCLVRQRAGHHCENAVIIILIMAWEGIPRSLGDSLYNDITETITKYGNPTSRRCGLNDDRTCACQGKDPNTCGASFSFGCSWSMYFNGCKYARSKTPRKFRLIGENPKEEDGLKDNFQNLATKVAPVYKMLAPQAYQNQVNNEDIAIDCRLGLKEGRPFSGVTACMDFCAHAHKDQHNLYNGCTVVCTLTKEDNRMIGRVAEDEQLHVLPLYKVSTTDEFGSEEGQLEKIKKGGIHVLSSFPREVRKLSEPAKSCRQRQLEAKKAAAEKKKLQKEKLVSPDKTKQEPSDKKTCQQNPGVPQQQTKPCIKVEPSNHYNNFKYNGNGVVESYSVLGSCRPSDPYSMNSVYSYHSFYAQPNLPSVNGFHSKYALPPFGFYGFPNNPVVPNQFMNYGTSDARNSGWMNNCFEKKPELQSLADGMNQSYGSELSEQSFRRSSEVPHHYSLQNPSSQKSVNVPHRTTPAPVETTPYSNLPCYNKVIKKEPGSDPLVDSFQRANSVHSHSPGVNHSLQASDLPISYKANGALSSSGRTNAESPCSMFMPNDKNGLEKKDYFGVHSNAPGLKDKQWPPYGTDVSVRQHDSLDSQSPGKVWSSCKLSDSSAALPSSASTQDKNWNGRQVSLNQGMKESALFQEKLWNSVAASDRCSATPSDRSSITPCSELQDKNWGSFPNPTVNSLKTDSSQNHWDPYSLDDNMDDGQSKSVKEEDDEEIWSDSEHNFLDENIGGVAVAPGHGSILIECARRELHATTPLKKPNRCHPTRISLVFYQHKNLNQPNHGLALWEAKMKQLAERARAREEEAAKLGIKQEVKSLGKKRKWGGAATTETPPVEKKDYTPTRQAATILTDSATTSFSYAYTKVTGPYSRFI.

Residues 58-99 (SNKKRKRCGVCVPCLRKEPCGACYNCVNRSTSHQICKMRKCE) form a CXXC-type zinc finger. Zn(2+) contacts are provided by Cys-65, Cys-68, Cys-71, Cys-77, Cys-80, Cys-83, Cys-93, and Cys-98. Disordered regions lie at residues 434–455 (KNALPVPQSPRQTSWEQNKKSS), 602–658 (WWVP…EGSA), 751–787 (KDQCPTPSTHDTSSSSGQGDSANQHTNVSDVPGQNDL), and 808–867 (DFSL…PVSR). Composition is skewed to polar residues over residues 442 to 455 (SPRQTSWEQNKKSS) and 602 to 614 (WWVPSSQQAPVSK). The span at 640–652 (KPQRKQVQIKKPK) shows a compositional bias: basic residues. Low complexity predominate over residues 758 to 771 (STHDTSSSSGQGDS). The span at 847–867 (ENSTKPATHSNPALSNNPVSR) shows a compositional bias: polar residues. The Zn(2+) site is built by Cys-957, Cys-959, Cys-1017, His-1043, and Cys-1045. Arg-1085 contributes to the 2-oxoglutarate binding site. Zn(2+)-binding residues include Cys-1095, Cys-1097, Cys-1113, Cys-1122, and Cys-1182. Cys-1198 serves as a coordination point for 2-oxoglutarate. His-1204 contributes to the Zn(2+) binding site. Fe cation is bound by residues His-1206 and Asp-1208. His-1240 contacts 2-oxoglutarate. 4 disordered regions span residues 1282-1338 (SEPA…QQTK), 1457-1501 (YGSE…VETT), 1591-1624 (SNAPGLKDKQWPPYGTDVSVRQHDSLDSQSPGKV), and 1680-1745 (SATP…DEEI). The segment covering 1291–1325 (RQLEAKKAAAEKKKLQKEKLVSPDKTKQEPSDKKT) has biased composition (basic and acidic residues). Residues 1326–1338 (CQQNPGVPQQQTK) are compositionally biased toward polar residues. A compositionally biased stretch (basic and acidic residues) spans 1465 to 1474 (SFRRSSEVPH). Polar residues predominate over residues 1477-1487 (SLQNPSSQKSV). Polar residues-rich tracts occupy residues 1680-1693 (SATPSDRSSITPCS) and 1702-1719 (SFPNPTVNSLKTDSSQNH). Residue His-1780 coordinates Fe cation. Position 1795–1797 (1795–1797 (RIS)) interacts with 2-oxoglutarate.

It belongs to the TET family. Fe(2+) serves as cofactor. The cofactor is Zn(2+).

It localises to the nucleus. The protein localises to the chromosome. It catalyses the reaction a 5-methyl-2'-deoxycytidine in DNA + 2-oxoglutarate + O2 = a 5-hydroxymethyl-2'-deoxycytidine in DNA + succinate + CO2. The catalysed reaction is a 5-hydroxymethyl-2'-deoxycytidine in DNA + 2-oxoglutarate + O2 = a 5-formyl-2'-deoxycytidine in DNA + succinate + CO2 + H2O. It carries out the reaction a 5-formyl-2'-deoxycytidine in DNA + 2-oxoglutarate + O2 = a 5-carboxyl-2'-deoxycytidine in DNA + succinate + CO2 + H(+). Dioxygenase that catalyzes the conversion of the modified genomic base 5-methylcytosine (5mC) into 5-hydroxymethylcytosine (5hmC) and plays a key role in epigenetic chromatin reprogramming during embryonic development. Conversion of 5mC into 5hmC probably constitutes the first step in cytosine demethylation. Selectively binds to the promoter region of target genes and contributes to regulate the expression of numerous developmental genes, including pax6, rax, sox9 and six3. May also contribute to the regulation of target genes in ways that do not require its enzyme activity. The sequence is that of Methylcytosine dioxygenase tet3 from Xenopus tropicalis (Western clawed frog).